Reading from the N-terminus, the 603-residue chain is Elongation factor 4 (603 aa).

The tr-type G domain occupies 6–188 (AHIRNFCIIA…SVVQNVPPPS (183 aa)). GTP contacts are provided by residues 18–23 (DHGKST) and 135–138 (NKID).

The protein belongs to the TRAFAC class translation factor GTPase superfamily. Classic translation factor GTPase family. LepA subfamily.

Its subcellular location is the cell inner membrane. It catalyses the reaction GTP + H2O = GDP + phosphate + H(+). Required for accurate and efficient protein synthesis under certain stress conditions. May act as a fidelity factor of the translation reaction, by catalyzing a one-codon backward translocation of tRNAs on improperly translocated ribosomes. Back-translocation proceeds from a post-translocation (POST) complex to a pre-translocation (PRE) complex, thus giving elongation factor G a second chance to translocate the tRNAs correctly. Binds to ribosomes in a GTP-dependent manner. The polypeptide is Elongation factor 4 (Myxococcus xanthus (strain DK1622)).